The sequence spans 352 residues: GTPase Obg (352 aa).

The Obg domain occupies 1 to 159 (MQFIDQAEIQ…RMLRLELKLL (159 aa)). One can recognise an OBG-type G domain in the interval 160-330 (AEVGIIGLPN…LMQEIWGLLE (171 aa)). Residues 166-173 (GLPNAGKS), 191-195 (FTTLV), 213-216 (DIPG), 280-283 (NKVD), and 311-313 (SAV) each bind GTP. Positions 173 and 193 each coordinate Mg(2+).

The protein belongs to the TRAFAC class OBG-HflX-like GTPase superfamily. OBG GTPase family. In terms of assembly, monomer. The cofactor is Mg(2+).

It localises to the cytoplasm. An essential GTPase which binds GTP, GDP and possibly (p)ppGpp with moderate affinity, with high nucleotide exchange rates and a fairly low GTP hydrolysis rate. Plays a role in control of the cell cycle, stress response, ribosome biogenesis and in those bacteria that undergo differentiation, in morphogenesis control. This Trichodesmium erythraeum (strain IMS101) protein is GTPase Obg.